A 236-amino-acid polypeptide reads, in one-letter code: Protein-S-isoprenylcysteine O-methyltransferase (236 aa).

Transmembrane regions (helical) follow at residues 3–23 (NLHT…LGCV), 24–44 (FGLG…FFAF), 76–96 (AYWL…GKSF), and 108–128 (FLIN…LCLG). Residues 155-158 (HLLV), tyrosine 163, and 168-171 (HPSY) contribute to the S-adenosyl-L-methionine site. The chain crosses the membrane as a helical span at residues 174–194 (FFIWALGTQMLLGNFVSTLLF). Arginine 205 lines the substrate pocket. Glutamate 209 lines the S-adenosyl-L-methionine pocket.

Belongs to the class VI-like SAM-binding methyltransferase superfamily. Isoprenylcysteine carboxyl methyltransferase family.

Its subcellular location is the membrane. The enzyme catalyses [protein]-C-terminal S-[(2E,6E)-farnesyl]-L-cysteine + S-adenosyl-L-methionine = [protein]-C-terminal S-[(2E,6E)-farnesyl]-L-cysteine methyl ester + S-adenosyl-L-homocysteine. In terms of biological role, mediates C-terminal methylation of the isoprenylated C-terminal cysteine in M-factor. The sequence is that of Protein-S-isoprenylcysteine O-methyltransferase (mam4) from Schizosaccharomyces pombe (strain 972 / ATCC 24843) (Fission yeast).